The primary structure comprises 71 residues: Long neurotoxin 1 (71 aa).

5 cysteine pairs are disulfide-bonded: cysteine 3–cysteine 21, cysteine 14–cysteine 42, cysteine 27–cysteine 31, cysteine 46–cysteine 57, and cysteine 58–cysteine 63.

Belongs to the three-finger toxin family. Long-chain subfamily. Type II alpha-neurotoxin sub-subfamily. In terms of tissue distribution, expressed by the venom gland.

Its subcellular location is the secreted. Functionally, binds with high affinity to muscular (alpha-1/CHRNA1) and neuronal (alpha-7/CHRNA7) nicotinic acetylcholine receptor (nAChR) and inhibits acetylcholine from binding to the receptor, thereby impairing neuromuscular and neuronal transmission. This chain is Long neurotoxin 1, found in Naja melanoleuca (Forest cobra).